A 275-amino-acid polypeptide reads, in one-letter code: MNVFENFWTIVHYFVLGLVQGITEPIPISSSGHIIIFRELFGIEARGLSFEIFVNLASLLAVLIIYRKDIVRLAVNSWNFIFKQEKESKSDFMFVVYLVLATIPVGIVGVLFGDEIGAFIGEDGTTVVGITLLITAAAIWMIRNLRGRKIEGDLSTKDAVIVGLAQAVAVTPGISRSGATLVASMLMGMKQDTALRFSFLLYIPVSLGSSILEIPNIVRDPNVQELWIPYLVAFITAFIASYFALKWFMNIMRHGNLKYFAYYCVIVGVLVLIFL.

7 helical membrane passes run 8–28, 45–65, 92–112, 119–139, 197–217, 225–245, and 255–275; these read WTIV…PIPI, ARGL…VLII, FMFV…GVLF, FIGE…AAAI, FSFL…IPNI, ELWI…YFAL, and GNLK…LIFL.

It belongs to the UppP family.

Its subcellular location is the cell membrane. The enzyme catalyses di-trans,octa-cis-undecaprenyl diphosphate + H2O = di-trans,octa-cis-undecaprenyl phosphate + phosphate + H(+). Catalyzes the dephosphorylation of undecaprenyl diphosphate (UPP). Confers resistance to bacitracin. This chain is Undecaprenyl-diphosphatase, found in Oceanobacillus iheyensis (strain DSM 14371 / CIP 107618 / JCM 11309 / KCTC 3954 / HTE831).